The following is a 207-amino-acid chain: Large ribosomal subunit protein uL4 (207 aa).

The tract at residues 49 to 78 is disordered; it reads HAVKNRSAVSGGGRKPWRQKGTGRARQGSI.

The protein belongs to the universal ribosomal protein uL4 family. Part of the 50S ribosomal subunit.

One of the primary rRNA binding proteins, this protein initially binds near the 5'-end of the 23S rRNA. It is important during the early stages of 50S assembly. It makes multiple contacts with different domains of the 23S rRNA in the assembled 50S subunit and ribosome. Functionally, forms part of the polypeptide exit tunnel. The protein is Large ribosomal subunit protein uL4 of Streptococcus equi subsp. zooepidemicus (strain H70).